The sequence spans 495 residues: E3 ubiquitin-protein ligase RAD18 (495 aa).

Met1 carries the N-acetylmethionine modification. An RING-type zinc finger spans residues 25-64 (CGICFEYFNIAMIIPQCSHNYCSLCIRKFLSYKTQCPTCC). Phosphoserine occurs at positions 99 and 103. Thr118 is subject to Phosphothreonine. Phosphoserine occurs at positions 122, 125, 142, 158, and 164. A disordered region spans residues 152–197 (ENKSKFSPQKEASPAAKTKETRSVEEIAPDPSEAKRPEPPSTSTLK). The segment at 201 to 228 (KVDCPVCGVNIPESHINKHLDSCLSREE) adopts a UBZ4-type zinc-finger fold. Positions 204, 207, 219, and 223 each coordinate Zn(2+). Residues 232-240 (SLRSSVHKR) carry the LR motif motif. The SAP domain occupies 248–282 (YNLLSDRDLKKKLKEHGLSIQGNKQQLIKRHQEFV). Ser322 carries the phosphoserine modification. Lys376 is covalently cross-linked (Glycyl lysine isopeptide (Lys-Gly) (interchain with G-Cter in SUMO2)). Disordered stretches follow at residues 400–423 (NHFS…DSSS) and 456–495 (AWEA…RNRN). Over residues 410 to 421 (PEELEPDREEDS) the composition is skewed to acidic residues. Residues Ser471 and Ser483 each carry the phosphoserine modification. Residues 479–495 (RAAESAEIEPRNKRNRN) show a composition bias toward basic and acidic residues.

Belongs to the RAD18 family. In terms of assembly, homodimer. Interacts with UBE2A and UBE2B, one homodimer binding one molecule of UBE2B. Interacts with SHPRH. Interacts with HLTF. Interacts with SPRTN; leading to enhance chromatin association of RAD18 and RAD18-mediated PCNA ubiquitination and translesion DNA synthesis. Interacts (via C-terminus and phosphorylated form) with SLF1 (via BRCT domains); this interaction is required for efficient repair of UV-induced DNA damage. Interacts with SLF2. Interacts with SMC5; this interaction is increased in a SLF1 or SLF2-dependent manner. Interacts with DNA damage up-regulated protein DDUP. Forms a complex with DDUP and H2AX following DDUP phosphorylation.

It is found in the nucleus. Its subcellular location is the cytoplasm. It localises to the cytoskeleton. The protein localises to the microtubule organizing center. The protein resides in the centrosome. The enzyme catalyses S-ubiquitinyl-[E2 ubiquitin-conjugating enzyme]-L-cysteine + [acceptor protein]-L-lysine = [E2 ubiquitin-conjugating enzyme]-L-cysteine + N(6)-ubiquitinyl-[acceptor protein]-L-lysine.. It functions in the pathway protein modification; protein ubiquitination. E3 ubiquitin-protein ligase involved in postreplication repair of UV-damaged DNA. Postreplication repair functions in gap-filling of a daughter strand on replication of damaged DNA. Associates to the E2 ubiquitin conjugating enzyme UBE2B to form the UBE2B-RAD18 ubiquitin ligase complex involved in mono-ubiquitination of DNA-associated PCNA on 'Lys-164'. Has ssDNA binding activity. In Homo sapiens (Human), this protein is E3 ubiquitin-protein ligase RAD18 (RAD18).